The sequence spans 576 residues: Eukaryotic translation initiation factor 2A (576 aa).

WD repeat units follow at residues 71–119 (LPAA…LVFS), 266–307 (DREG…VSII), 308–349 (PPAP…KKIT), and 351–396 (VEAA…MFYE). Disordered stretches follow at residues 422 to 461 (SASLPSPPTPHASASKLAAKPSVKPAGAYRPPGARGQNST) and 475 to 505 (GSANKHVNSSRQRVVPGATPVIDGNKKNNKK). Residues 475-486 (GSANKHVNSSRQ) show a composition bias toward polar residues.

Belongs to the WD repeat EIF2A family.

It is found in the cytoplasm. Functions in the early steps of protein synthesis of a small number of specific mRNAs. Acts by directing the binding of methionyl-tRNAi to 40S ribosomal subunits. In contrast to the eIF-2 complex, it binds methionyl-tRNAi to 40S subunits in a codon-dependent manner, whereas the eIF-2 complex binds methionyl-tRNAi to 40S subunits in a GTP-dependent manner. This is Eukaryotic translation initiation factor 2A from Schizosaccharomyces pombe (strain 972 / ATCC 24843) (Fission yeast).